A 352-amino-acid polypeptide reads, in one-letter code: NADH-ubiquinone oxidoreductase chain 2 (352 aa).

A run of 11 helical transmembrane segments spans residues 4–24 (MISI…VSAE), 26–46 (WFVI…ILWF), 60–80 (FLVQ…QAWF), 96–116 (LCLS…FWLP), 124–144 (FIQG…LLFY), 150–170 (FSYF…WGGL), 178–198 (ILAF…AFSL), 205–225 (LFIY…LSIF), 241–261 (ITLV…TGFI), 274–294 (GFIF…FFYL), and 330–350 (LVSS…PLYI).

It belongs to the complex I subunit 2 family.

Its subcellular location is the mitochondrion inner membrane. It catalyses the reaction a ubiquinone + NADH + 5 H(+)(in) = a ubiquinol + NAD(+) + 4 H(+)(out). Its function is as follows. Core subunit of the mitochondrial membrane respiratory chain NADH dehydrogenase (Complex I) that is believed to belong to the minimal assembly required for catalysis. Complex I functions in the transfer of electrons from NADH to the respiratory chain. The immediate electron acceptor for the enzyme is believed to be ubiquinone. In Paracentrotus lividus (Common sea urchin), this protein is NADH-ubiquinone oxidoreductase chain 2 (ND2).